We begin with the raw amino-acid sequence, 634 residues long: Calcium up-regulated protein D (634 aa).

The interval 1–23 (MINIEDISKSSNQSEEKQLKSTS) is disordered. Ricin B-type lectin domains are found at residues 27-146 (KPKY…WTTF) and 117-250 (PGNG…WGIN).

This sequence belongs to the cup family.

It is found in the cytoplasm. The protein resides in the membrane. Its function is as follows. May play an important role in stabilizing and/or regulating the cell membrane during Ca(2+) stress or certain stages of development. The protein is Calcium up-regulated protein D (cupD) of Dictyostelium discoideum (Social amoeba).